The primary structure comprises 155 residues: Large ribosomal subunit protein uL15 (155 aa).

Residues 1–16 show a composition bias toward basic residues; the sequence is MVRRFKRAVKYRRGSR. The tract at residues 1–35 is disordered; the sequence is MVRRFKRAVKYRRGSRTHGWGRVGQHRKSGGSGGK.

This sequence belongs to the universal ribosomal protein uL15 family. In terms of assembly, part of the 50S ribosomal subunit.

Functionally, binds to the 23S rRNA. This is Large ribosomal subunit protein uL15 from Pyrobaculum arsenaticum (strain DSM 13514 / JCM 11321 / PZ6).